An 802-amino-acid chain; its full sequence is Sucrose synthase 1 (802 aa).

Residues 272 to 749 (MMFNVVILSP…GLQRIYEKYT (478 aa)) form a GT-B glycosyltransferase region.

This sequence belongs to the glycosyltransferase 1 family. Plant sucrose synthase subfamily.

The enzyme catalyses an NDP-alpha-D-glucose + D-fructose = a ribonucleoside 5'-diphosphate + sucrose + H(+). Its function is as follows. Sucrose-cleaving enzyme that provides UDP-glucose and fructose for various metabolic pathways. Most active in the sink tissues where it is responsible for the breakdown of the arriving sucrose. The polypeptide is Sucrose synthase 1 (SH-1) (Zea mays (Maize)).